Reading from the N-terminus, the 250-residue chain is 1-(5-phosphoribosyl)-5-[(5-phosphoribosylamino)methylideneamino] imidazole-4-carboxamide isomerase (250 aa).

The Proton acceptor role is filled by Asp-12. Asp-133 (proton donor) is an active-site residue.

The protein belongs to the HisA/HisF family.

The protein resides in the cytoplasm. It carries out the reaction 1-(5-phospho-beta-D-ribosyl)-5-[(5-phospho-beta-D-ribosylamino)methylideneamino]imidazole-4-carboxamide = 5-[(5-phospho-1-deoxy-D-ribulos-1-ylimino)methylamino]-1-(5-phospho-beta-D-ribosyl)imidazole-4-carboxamide. It functions in the pathway amino-acid biosynthesis; L-histidine biosynthesis; L-histidine from 5-phospho-alpha-D-ribose 1-diphosphate: step 4/9. In Zymomonas mobilis subsp. mobilis (strain ATCC 31821 / ZM4 / CP4), this protein is 1-(5-phosphoribosyl)-5-[(5-phosphoribosylamino)methylideneamino] imidazole-4-carboxamide isomerase.